The chain runs to 298 residues: Lipoyl synthase (298 aa).

7 residues coordinate [4Fe-4S] cluster: Cys40, Cys45, Cys51, Cys67, Cys71, Cys74, and Ser280. The Radical SAM core domain occupies 53–269 (AVRKTATFMI…KEIALSKGFS (217 aa)).

It belongs to the radical SAM superfamily. Lipoyl synthase family. It depends on [4Fe-4S] cluster as a cofactor.

The protein localises to the cytoplasm. It catalyses the reaction [[Fe-S] cluster scaffold protein carrying a second [4Fe-4S](2+) cluster] + N(6)-octanoyl-L-lysyl-[protein] + 2 oxidized [2Fe-2S]-[ferredoxin] + 2 S-adenosyl-L-methionine + 4 H(+) = [[Fe-S] cluster scaffold protein] + N(6)-[(R)-dihydrolipoyl]-L-lysyl-[protein] + 4 Fe(3+) + 2 hydrogen sulfide + 2 5'-deoxyadenosine + 2 L-methionine + 2 reduced [2Fe-2S]-[ferredoxin]. The protein operates within protein modification; protein lipoylation via endogenous pathway; protein N(6)-(lipoyl)lysine from octanoyl-[acyl-carrier-protein]. Catalyzes the radical-mediated insertion of two sulfur atoms into the C-6 and C-8 positions of the octanoyl moiety bound to the lipoyl domains of lipoate-dependent enzymes, thereby converting the octanoylated domains into lipoylated derivatives. The sequence is that of Lipoyl synthase from Bacillus cereus (strain G9842).